The sequence spans 395 residues: MADKKLDTQLVNAGRSKKYTLGAVNSVIQRASSLVFDSVEAKKHATRNRANGELFYGRRGTLTHFSLQQAMCELEGGAGCVLFPCGAAAVANSILAFIEQGDHVLMTNTAYEPSQDFCSKILSKLGVTTSWFDPLIGADIVKHLQPNTKIVFLESPGSITMEVHDVPAIVAAVRSVVPDAIIMIDNTWAAGVLFKALDFGIDVSIQAATKYLVGHSDAMIGTAVCNARCWEQLRENAYLMGQMVDADTAYITSRGLRTLGVRLRQHHESSLKVAEWLAEHPQVARVNHPALPGSKGHEFWKRDFTGSSGLFSFVLKKKLNNEELANYLDNFSLFSMAYSWGGYESLILANQPEHIAAIRPQGEIDFSGTLIRLHIGLEDVDDLIADLDAGFARIV.

The residue at position 210 (lysine 210) is an N6-(pyridoxal phosphate)lysine.

Belongs to the trans-sulfuration enzymes family. In terms of assembly, homotetramer; dimer of dimers. It depends on pyridoxal 5'-phosphate as a cofactor.

It localises to the cytoplasm. It catalyses the reaction L,L-cystathionine + H2O = L-homocysteine + pyruvate + NH4(+). It carries out the reaction L-cysteine + H2O = hydrogen sulfide + pyruvate + NH4(+) + H(+). The catalysed reaction is an S-substituted L-cysteine + H2O = a thiol + pyruvate + NH4(+). It functions in the pathway amino-acid biosynthesis; L-methionine biosynthesis via de novo pathway; L-homocysteine from L-cystathionine: step 1/1. Its activity is regulated as follows. L-cysteine inhibits cystathionine beta-lyase activity competitively. Inhibited by aminoethoxyvinylglycine (AVG). Primarily catalyzes the cleavage of cystathionine to homocysteine, pyruvate and ammonia during methionine biosynthesis. Also exhibits cysteine desulfhydrase activity, producing sulfide from cysteine. In addition, under certain growth conditions, exhibits significant alanine racemase coactivity. The polypeptide is Cystathionine beta-lyase MetC (Escherichia coli (strain K12)).